Consider the following 141-residue polypeptide: Hemoglobin subunit alpha (141 aa).

Positions valine 1 to arginine 141 constitute a Globin domain. Serine 3 is modified (phosphoserine). Lysine 7 is subject to N6-succinyllysine. A Phosphothreonine modification is found at threonine 8. Lysine 11 bears the N6-succinyllysine mark. The residue at position 16 (lysine 16) is an N6-acetyllysine; alternate. Residue lysine 16 is modified to N6-succinyllysine; alternate. Position 24 is a phosphotyrosine (tyrosine 24). Phosphoserine is present on serine 35. Lysine 40 is modified (N6-succinyllysine). Residue serine 49 is modified to Phosphoserine. An O2-binding site is contributed by histidine 58. Histidine 87 provides a ligand contact to heme b. Residue serine 102 is modified to Phosphoserine. Threonine 108 is subject to Phosphothreonine. Serine 124 bears the Phosphoserine mark. 2 positions are modified to phosphothreonine: threonine 134 and threonine 137. Serine 138 carries the post-translational modification Phosphoserine.

This sequence belongs to the globin family. In terms of assembly, heterotetramer of two alpha chains and two beta chains. As to expression, red blood cells.

Functionally, involved in oxygen transport from the lung to the various peripheral tissues. This is Hemoglobin subunit alpha from Tamias merriami (Merriam's chipmunk).